The sequence spans 334 residues: DNA-directed RNA polymerase subunit alpha (334 aa).

Residues 1–231 (MNMIKIEPYI…KQMSIFGVDL (231 aa)) are alpha N-terminal domain (alpha-NTD). The segment at 247-334 (ELKTLMIKID…NRKLAKLKSN (88 aa)) is alpha C-terminal domain (alpha-CTD).

It belongs to the RNA polymerase alpha chain family. As to quaternary structure, homodimer. The RNAP catalytic core consists of 2 alpha, 1 beta/beta' and 1 omega subunit. When a sigma factor is associated with the core the holoenzyme is formed, which can initiate transcription.

It catalyses the reaction RNA(n) + a ribonucleoside 5'-triphosphate = RNA(n+1) + diphosphate. Functionally, DNA-dependent RNA polymerase catalyzes the transcription of DNA into RNA using the four ribonucleoside triphosphates as substrates. In Helicobacter hepaticus (strain ATCC 51449 / 3B1), this protein is DNA-directed RNA polymerase subunit alpha.